The primary structure comprises 295 residues: Ribosomal protein L11 methyltransferase (295 aa).

Positions 138, 161, 183, and 230 each coordinate S-adenosyl-L-methionine.

It belongs to the methyltransferase superfamily. PrmA family.

The protein resides in the cytoplasm. The enzyme catalyses L-lysyl-[protein] + 3 S-adenosyl-L-methionine = N(6),N(6),N(6)-trimethyl-L-lysyl-[protein] + 3 S-adenosyl-L-homocysteine + 3 H(+). Functionally, methylates ribosomal protein L11. The chain is Ribosomal protein L11 methyltransferase from Rhodopseudomonas palustris (strain BisB5).